We begin with the raw amino-acid sequence, 162 residues long: tRNA (cytidine(34)-2'-O)-methyltransferase (162 aa).

S-adenosyl-L-methionine-binding residues include Leu-83, Gly-105, Ile-127, and Ser-135.

This sequence belongs to the class IV-like SAM-binding methyltransferase superfamily. RNA methyltransferase TrmH family. TrmL subfamily. As to quaternary structure, homodimer.

Its subcellular location is the cytoplasm. It carries out the reaction cytidine(34) in tRNA + S-adenosyl-L-methionine = 2'-O-methylcytidine(34) in tRNA + S-adenosyl-L-homocysteine + H(+). It catalyses the reaction 5-carboxymethylaminomethyluridine(34) in tRNA(Leu) + S-adenosyl-L-methionine = 5-carboxymethylaminomethyl-2'-O-methyluridine(34) in tRNA(Leu) + S-adenosyl-L-homocysteine + H(+). Its function is as follows. Methylates the ribose at the nucleotide 34 wobble position in the two leucyl isoacceptors tRNA(Leu)(CmAA) and tRNA(Leu)(cmnm5UmAA). Catalyzes the methyl transfer from S-adenosyl-L-methionine to the 2'-OH of the wobble nucleotide. This chain is tRNA (cytidine(34)-2'-O)-methyltransferase, found in Photorhabdus asymbiotica subsp. asymbiotica (strain ATCC 43949 / 3105-77) (Xenorhabdus luminescens (strain 2)).